The chain runs to 527 residues: EGF domain-specific O-linked N-acetylglucosamine transferase (527 aa).

The N-terminal stretch at 1–17 (MLKLLVLGVLLHDVSLS) is a signal peptide. The Required for optimal activity motif lies at 295 to 297 (DYD). Asn-354 carries N-linked (GlcNAc...) asparagine glycosylation. A Prevents secretion from ER motif is present at residues 524–527 (RDEL).

This sequence belongs to the glycosyltransferase 61 family.

The protein localises to the endoplasmic reticulum lumen. The enzyme catalyses L-seryl-[protein] + UDP-N-acetyl-alpha-D-glucosamine = 3-O-(N-acetyl-beta-D-glucosaminyl)-L-seryl-[protein] + UDP + H(+). It catalyses the reaction L-threonyl-[protein] + UDP-N-acetyl-alpha-D-glucosamine = 3-O-(N-acetyl-beta-D-glucosaminyl)-L-threonyl-[protein] + UDP + H(+). Functionally, catalyzes the transfer of a single N-acetylglucosamine from UDP-GlcNAc to a serine or threonine residue in extracellular proteins resulting in their modification with a beta-linked N-acetylglucosamine (O-GlcNAc). Specifically glycosylates the Thr residue located between the fifth and sixth conserved cysteines of folded EGF-like domains. The sequence is that of EGF domain-specific O-linked N-acetylglucosamine transferase (EOGT) from Canis lupus familiaris (Dog).